Here is a 424-residue protein sequence, read N- to C-terminus: MLDVKYLRNHFEEVKEKLLKRGEDLTNIDRFEELDKKRRELIAKAEELKNKRNEVSQQIAVLKREKKDADHLIAEMRDVGDRIKTMDDEIRQVEEELNALLLSIPNIPHESVPVGKSEEDNVEVRKWGEPRSFSFEPKPHWDIAEQLGILDFERAAKVTGSRFVFYKGLGARLERALINFMLDVHIEEFGYQEILPPYLVNRASMTGTGQLPKFEEDAFRIETDDYFLIPTAEVPVTNLHRDEILSAEDLPIYYVAYSACFRAEAGSAGRDTRGLIRQHQFNKVELVKFVKPEDSYDELEKLTNQAERILQLLGLPYRVVCLCTGDLGFSSAKTYDIEVWLPSYGTYREISSCSNFEAFQARRANIRFRREPKAKPEYVHTLNGSGLAIGRTVAAILENYQQEDGTVVIPEVLRPYMGNLEVIR.

Thr231–Glu233 provides a ligand contact to L-serine. Arg262–Glu264 contributes to the ATP binding site. Glu285 contacts L-serine. Glu349–Ser352 contributes to the ATP binding site. An L-serine-binding site is contributed by Ser385.

Belongs to the class-II aminoacyl-tRNA synthetase family. Type-1 seryl-tRNA synthetase subfamily. Homodimer. The tRNA molecule binds across the dimer.

Its subcellular location is the cytoplasm. The enzyme catalyses tRNA(Ser) + L-serine + ATP = L-seryl-tRNA(Ser) + AMP + diphosphate + H(+). The catalysed reaction is tRNA(Sec) + L-serine + ATP = L-seryl-tRNA(Sec) + AMP + diphosphate + H(+). It participates in aminoacyl-tRNA biosynthesis; selenocysteinyl-tRNA(Sec) biosynthesis; L-seryl-tRNA(Sec) from L-serine and tRNA(Sec): step 1/1. Its function is as follows. Catalyzes the attachment of serine to tRNA(Ser). Is also able to aminoacylate tRNA(Sec) with serine, to form the misacylated tRNA L-seryl-tRNA(Sec), which will be further converted into selenocysteinyl-tRNA(Sec). The polypeptide is Serine--tRNA ligase (Geobacillus sp. (strain WCH70)).